Consider the following 890-residue polypeptide: Translation initiation factor IF-2 (890 aa).

The segment at 45–304 (LIDHLNQKNS…LQQGFQKPAQ (260 aa)) is disordered. A compositionally biased stretch (polar residues) spans 67–81 (STLNIPGTGGKSKSV). The segment covering 92 to 217 (VKRDPQEAER…RMAEENKWID (126 aa)) has biased composition (basic and acidic residues). Residues 252–266 (GRGRNAKAARPKKGN) show a composition bias toward basic residues. The segment covering 267 to 280 (KHAESKADREEARA) has biased composition (basic and acidic residues). Positions 389 to 558 (PRAPVVTIMG…LLQAEVLELK (170 aa)) constitute a tr-type G domain. The tract at residues 398-405 (GHVDHGKT) is G1. 398–405 (GHVDHGKT) is a binding site for GTP. The interval 423-427 (GITQH) is G2. The interval 444 to 447 (DTPG) is G3. GTP-binding positions include 444–448 (DTPGH) and 498–501 (NKID). The interval 498–501 (NKID) is G4. Residues 534-536 (SAK) form a G5 region. Lysine 808 carries the post-translational modification N6-acetyllysine.

Belongs to the TRAFAC class translation factor GTPase superfamily. Classic translation factor GTPase family. IF-2 subfamily.

The protein resides in the cytoplasm. One of the essential components for the initiation of protein synthesis. Protects formylmethionyl-tRNA from spontaneous hydrolysis and promotes its binding to the 30S ribosomal subunits. Also involved in the hydrolysis of GTP during the formation of the 70S ribosomal complex. The polypeptide is Translation initiation factor IF-2 (Escherichia coli O81 (strain ED1a)).